Consider the following 547-residue polypeptide: Chaperonin GroEL 1 (547 aa).

ATP is bound by residues 29 to 32 (TLGP), 86 to 90 (DGTTT), glycine 418, 482 to 484 (NAA), and aspartate 498.

Belongs to the chaperonin (HSP60) family. As to quaternary structure, forms a cylinder of 14 subunits composed of two heptameric rings stacked back-to-back. Interacts with the co-chaperonin GroES.

It is found in the cytoplasm. The enzyme catalyses ATP + H2O + a folded polypeptide = ADP + phosphate + an unfolded polypeptide.. Functionally, together with its co-chaperonin GroES, plays an essential role in assisting protein folding. The GroEL-GroES system forms a nano-cage that allows encapsulation of the non-native substrate proteins and provides a physical environment optimized to promote and accelerate protein folding. The chain is Chaperonin GroEL 1 from Corynebacterium jeikeium (strain K411).